The chain runs to 107 residues: Large ribosomal subunit protein mL55 (107 aa).

The N-terminal 16 residues, 1-16 (MLLKQLPQAVQQIRCI), are a transit peptide targeting the mitochondrion.

This sequence belongs to the mitochondrion-specific ribosomal protein mL55 family. Component of the mitochondrial ribosome large subunit (39S) which comprises a 16S rRNA and about 50 distinct proteins. Ubiquitously expressed (at protein level).

It localises to the mitochondrion. Its function is as follows. Involved in mitochondrial biogenesis and G2/M phase cell cycle progression. The sequence is that of Large ribosomal subunit protein mL55 (mRpL55) from Drosophila melanogaster (Fruit fly).